The sequence spans 252 residues: MHNKIYNSFIDRKAKGIKSFAVLIDPDKVNPADIADLAAKCTAAKVDYIFLGGSLVITNHLDECVQQFKTLCDIPVVLFPGSPSQVSRYADALLYLSVISGRNPELLIGQHVLSAPAVKKSGLEVISTGYVLIDGGAPTTVSYISNTTPIPSDKDDIAMCTAMAGEMLGMKVVFMDAGSGARKPITESMISRVASQVSAPIIVGGGIRDAEKAYLNCKAGADIIVVGNAIEKETSLIKEMADAVHAAAPVLK.

2 residues coordinate Mg(2+): aspartate 25 and serine 54. Sn-glycerol 1-phosphate contacts are provided by residues 174–180 (FMDAGSG), 205–206 (GG), and 227–228 (GN).

The protein belongs to the GGGP/HepGP synthase family. Group II subfamily. As to quaternary structure, homohexamer. It depends on Mg(2+) as a cofactor.

It catalyses the reaction sn-glycerol 1-phosphate + (2E,6E,10E)-geranylgeranyl diphosphate = sn-3-O-(geranylgeranyl)glycerol 1-phosphate + diphosphate. Prenyltransferase that catalyzes the transfer of the geranylgeranyl moiety of geranylgeranyl diphosphate (GGPP) to the C3 hydroxyl of sn-glycerol-1-phosphate (G1P). This is Geranylgeranylglyceryl phosphate synthase from Chitinophaga pinensis (strain ATCC 43595 / DSM 2588 / LMG 13176 / NBRC 15968 / NCIMB 11800 / UQM 2034).